Here is a 127-residue protein sequence, read N- to C-terminus: Protein P6 (127 aa).

It localises to the virion membrane. The protein is Protein P6 (VI) of Pseudoalteromonas espejiana (Bacteriophage PM2).